Consider the following 384-residue polypeptide: Mitogen-activated protein kinase homolog 1 (384 aa).

One can recognise a Protein kinase domain in the interval Tyr-32 to Met-319. ATP is bound by residues Ile-38 to Val-46 and Lys-61. Residue Asp-158 is the Proton acceptor of the active site. Thr-191 is modified (phosphothreonine). A TXY motif is present at residues Thr-191–Tyr-193. A Phosphotyrosine modification is found at Tyr-193.

This sequence belongs to the protein kinase superfamily. CMGC Ser/Thr protein kinase family. MAP kinase subfamily. Mg(2+) is required as a cofactor. In terms of processing, dually phosphorylated on Thr-191 and Tyr-193, which activates the enzyme. As to expression, expressed in vegetative organs such as leaf, root, or stem. In the reproductive organs, it is found in the ovary, but not in the stamen.

It catalyses the reaction L-seryl-[protein] + ATP = O-phospho-L-seryl-[protein] + ADP + H(+). The enzyme catalyses L-threonyl-[protein] + ATP = O-phospho-L-threonyl-[protein] + ADP + H(+). With respect to regulation, activated by tyrosine and threonine phosphorylation. The sequence is that of Mitogen-activated protein kinase homolog 1 (MPK1) from Petunia hybrida (Petunia).